The primary structure comprises 175 residues: Large ribosomal subunit protein uL10 (175 aa).

It belongs to the universal ribosomal protein uL10 family. In terms of assembly, part of the ribosomal stalk of the 50S ribosomal subunit. The N-terminus interacts with L11 and the large rRNA to form the base of the stalk. The C-terminus forms an elongated spine to which L12 dimers bind in a sequential fashion forming a multimeric L10(L12)X complex.

Forms part of the ribosomal stalk, playing a central role in the interaction of the ribosome with GTP-bound translation factors. This chain is Large ribosomal subunit protein uL10, found in Prochlorococcus marinus (strain NATL2A).